The chain runs to 313 residues: tRNA-cytidine(32) 2-sulfurtransferase (313 aa).

The PP-loop motif motif lies at 54 to 59 (SGGKDS). Positions 129, 132, and 220 each coordinate [4Fe-4S] cluster.

It belongs to the TtcA family. Homodimer. Mg(2+) serves as cofactor. [4Fe-4S] cluster is required as a cofactor.

The protein localises to the cytoplasm. It catalyses the reaction cytidine(32) in tRNA + S-sulfanyl-L-cysteinyl-[cysteine desulfurase] + AH2 + ATP = 2-thiocytidine(32) in tRNA + L-cysteinyl-[cysteine desulfurase] + A + AMP + diphosphate + H(+). The protein operates within tRNA modification. Catalyzes the ATP-dependent 2-thiolation of cytidine in position 32 of tRNA, to form 2-thiocytidine (s(2)C32). The sulfur atoms are provided by the cysteine/cysteine desulfurase (IscS) system. In Methylibium petroleiphilum (strain ATCC BAA-1232 / LMG 22953 / PM1), this protein is tRNA-cytidine(32) 2-sulfurtransferase.